Reading from the N-terminus, the 132-residue chain is Small ribosomal subunit protein uS8 (132 aa).

The protein belongs to the universal ribosomal protein uS8 family. In terms of assembly, part of the 30S ribosomal subunit. Contacts proteins S5 and S12.

Its function is as follows. One of the primary rRNA binding proteins, it binds directly to 16S rRNA central domain where it helps coordinate assembly of the platform of the 30S subunit. The chain is Small ribosomal subunit protein uS8 from Renibacterium salmoninarum (strain ATCC 33209 / DSM 20767 / JCM 11484 / NBRC 15589 / NCIMB 2235).